A 1089-amino-acid polypeptide reads, in one-letter code: Platelet-derived growth factor receptor alpha (1089 aa).

An N-terminal signal peptide occupies residues 1-24 (MGTSHQVFLVLSCLLTGPGLISCQ). Ig-like C2-type domains are found at residues 25 to 113 (LLLP…SEIE), 117 to 201 (IYIY…FKTS), 202 to 306 (EFNV…KRVT), 319 to 410 (PTFG…FELS), and 414 to 517 (PASI…LKLV). The Extracellular portion of the chain corresponds to 25 to 528 (LLLPSILPNE…PTLRSELTVA (504 aa)). N-linked (GlcNAc...) asparagine glycans are attached at residues asparagine 42, asparagine 76, asparagine 89, asparagine 103, and asparagine 179. The cysteines at positions 49 and 100 are disulfide-linked. 2 disulfide bridges follow: cysteine 150-cysteine 189 and cysteine 235-cysteine 290. Residues asparagine 353, asparagine 359, asparagine 458, asparagine 468, and asparagine 506 are each glycosylated (N-linked (GlcNAc...) asparagine). An intrachain disulfide couples cysteine 435 to cysteine 501. Residues 529-549 (AAVLVLLVIVIVSLIVLVVIW) form a helical membrane-spanning segment. The Cytoplasmic portion of the chain corresponds to 550–1089 (KQKPRYEIRW…SSDLVEDSFL (540 aa)). Phosphotyrosine; by autocatalysis is present on residues tyrosine 572 and tyrosine 574. The Protein kinase domain occupies 593–954 (LVLGRILGSG…HLSEIVENLL (362 aa)). ATP is bound by residues 599-607 (LGSGAFGKV) and lysine 627. Phosphotyrosine; by autocatalysis occurs at positions 720, 731, 742, 754, 762, and 768. Catalysis depends on aspartate 818, which acts as the Proton acceptor. Tyrosine 849, tyrosine 988, and tyrosine 1018 each carry phosphotyrosine; by autocatalysis. Residues 1018–1089 (YIIPLPDIDP…SSDLVEDSFL (72 aa)) form a disordered region. The span at 1041-1059 (SSQTSEESAIETGSSSSTF) shows a compositional bias: polar residues. The span at 1065 to 1089 (ETIEDIDMMDDIGIDSSDLVEDSFL) shows a compositional bias: acidic residues.

The protein belongs to the protein kinase superfamily. Tyr protein kinase family. CSF-1/PDGF receptor subfamily. Interacts with homodimeric PDGFA, PDGFB and PDGFC, and with heterodimers formed by PDGFA and PDGFB. Monomer in the absence of bound ligand. Interaction with dimeric PDGFA, PDGFB and/or PDGFC leads to receptor dimerization, where both PDGFRA homodimers and heterodimers with PDGFRB are observed. Interacts (tyrosine phosphorylated) with SHB (via SH2 domain). Interacts (tyrosine phosphorylated) with SHF (via SH2 domain). Interacts (tyrosine phosphorylated) with SRC (via SH2 domain). Interacts (tyrosine phosphorylated) with PIK3R1. Interacts (tyrosine phosphorylated) with PLCG1 (via SH2 domain). Interacts (tyrosine phosphorylated) with CRK, GRB2 and GRB7. Interacts with CD248; this interaction promotes PDGF receptor signaling pathway. In terms of processing, ubiquitinated, leading to its internalization and degradation. Post-translationally, autophosphorylated on tyrosine residues upon ligand binding. Autophosphorylation occurs in trans, i.e. one subunit of the dimeric receptor phosphorylates tyrosine residues on the other subunit. Phosphorylation at Tyr-731 and Tyr-742 is important for interaction with PIK3R1. Phosphorylation at Tyr-720 and Tyr-754 is important for interaction with PTPN11. Phosphorylation at Tyr-762 is important for interaction with CRK. Phosphorylation at Tyr-572 and Tyr-574 is important for interaction with SRC and SRC family members. Phosphorylation at Tyr-988 and Tyr-1018 is important for interaction with PLCG1. As to expression, focally expressed in cortical interstitial cells and highly expressed in the interstitium of the papillary region. Also expressed by adventitial cells in arterial vessels. Up-regulated in areas of renal fibrosis. In mice with unilateral ureteral obstruction, expression in cortical interstitial cells becomes prominent at day 4 which increases progressively until day 14.

It is found in the cell membrane. The protein resides in the cell projection. The protein localises to the cilium. It localises to the golgi apparatus. It catalyses the reaction L-tyrosyl-[protein] + ATP = O-phospho-L-tyrosyl-[protein] + ADP + H(+). Its activity is regulated as follows. Present in an inactive conformation in the absence of bound ligand. Binding of PDGFA and/or PDGFB leads to dimerization and activation by autophosphorylation on tyrosine residues. Inhibited by imatinib, nilotinib and sorafenib. Functionally, tyrosine-protein kinase that acts as a cell-surface receptor for PDGFA, PDGFB and PDGFC and plays an essential role in the regulation of embryonic development, cell proliferation, survival and chemotaxis. Depending on the context, promotes or inhibits cell proliferation and cell migration. Plays an important role in the differentiation of bone marrow-derived mesenchymal stem cells. Required for normal skeleton development and cephalic closure during embryonic development. Required for normal development of the mucosa lining the gastrointestinal tract, and for recruitment of mesenchymal cells and normal development of intestinal villi. Plays a role in cell migration and chemotaxis in wound healing. Plays a role in platelet activation, secretion of agonists from platelet granules, and in thrombin-induced platelet aggregation. Binding of its cognate ligands - homodimeric PDGFA, homodimeric PDGFB, heterodimers formed by PDGFA and PDGFB or homodimeric PDGFC -leads to the activation of several signaling cascades; the response depends on the nature of the bound ligand and is modulated by the formation of heterodimers between PDGFRA and PDGFRB. Phosphorylates PIK3R1, PLCG1, and PTPN11. Activation of PLCG1 leads to the production of the cellular signaling molecules diacylglycerol and inositol 1,4,5-trisphosphate, mobilization of cytosolic Ca(2+) and the activation of protein kinase C. Phosphorylates PIK3R1, the regulatory subunit of phosphatidylinositol 3-kinase, and thereby mediates activation of the AKT1 signaling pathway. Mediates activation of HRAS and of the MAP kinases MAPK1/ERK2 and/or MAPK3/ERK1. Promotes activation of STAT family members STAT1, STAT3 and STAT5A and/or STAT5B. Receptor signaling is down-regulated by protein phosphatases that dephosphorylate the receptor and its down-stream effectors, and by rapid internalization of the activated receptor. The protein is Platelet-derived growth factor receptor alpha (Pdgfra) of Mus musculus (Mouse).